A 319-amino-acid chain; its full sequence is Dehydrogenase/reductase SDR family member 9 (319 aa).

The signal sequence occupies residues 1–17 (MLFWLLVLLILCGFLWN). NAD(+) is bound by residues 34-58 (ITGC…HVIA) and Asp83. Residue Ser164 participates in substrate binding. Tyr176 acts as the Proton acceptor in catalysis. Lys180 is an NAD(+) binding site.

It belongs to the short-chain dehydrogenases/reductases (SDR) family. Homotetramer.

Its subcellular location is the microsome membrane. It is found in the endoplasmic reticulum membrane. It carries out the reaction 3beta-hydroxy-5alpha-pregnane-20-one + NAD(+) = 5alpha-pregnane-3,20-dione + NADH + H(+). The enzyme catalyses 17beta-hydroxy-5alpha-androstan-3-one + NAD(+) = 5alpha-androstan-3,17-dione + NADH + H(+). It catalyses the reaction androsterone + NAD(+) = 5alpha-androstan-3,17-dione + NADH + H(+). The catalysed reaction is 5alpha-androstane-3alpha,17beta-diol + NAD(+) = 17beta-hydroxy-5alpha-androstan-3-one + NADH + H(+). It carries out the reaction all-trans-retinol + NAD(+) = all-trans-retinal + NADH + H(+). The enzyme catalyses 3alpha-hydroxy-5alpha-pregnan-20-one + NAD(+) = 5alpha-pregnane-3,20-dione + NADH + H(+). 3-alpha-hydroxysteroid dehydrogenase that converts 3-alpha-tetrahydroprogesterone (allopregnanolone) to dihydroxyprogesterone and 3-alpha-androstanediol to dihydroxyprogesterone. Also plays a role in the biosynthesis of retinoic acid from retinaldehyde. Can utilize both NADH and NADPH. In Bos taurus (Bovine), this protein is Dehydrogenase/reductase SDR family member 9 (DHRS9).